Reading from the N-terminus, the 790-residue chain is Histone-lysine N-methyltransferase, H3 lysine-9 specific SUVH6 (790 aa).

The disordered stretch occupies residues 251-271 (QLRILGVGTSSGSSSGDSSRN). The span at 256–268 (GVGTSSGSSSGDS) shows a compositional bias: low complexity. In terms of domain architecture, YDG spans 330–482 (GEVPGVEVGD…MNVFKFQLRR (153 aa)). The Pre-SET domain occupies 551–613 (KSCCCTTRCT…SCYLRVTQHG (63 aa)). The Zn(2+) site is built by Cys553, Cys554, Cys555, Cys559, Cys567, Cys569, Cys595, Cys599, Cys601, and Cys605. Residues 616-760 (LPLEIFKTKS…PLQELCYDYN (145 aa)) enclose the SET domain. S-adenosyl-L-methionine is bound by residues 626 to 628 (RGW), Asp662, Tyr664, Arg714, and 717 to 718 (NH). The Zn(2+) site is built by Cys720, Cys778, Cys780, and Cys785. Residues 774 to 790 (KQKPCFCGAAVCRRRLY) form the Post-SET domain.

Belongs to the class V-like SAM-binding methyltransferase superfamily. Histone-lysine methyltransferase family. Suvar3-9 subfamily.

It localises to the nucleus. Its subcellular location is the chromosome. It is found in the centromere. The enzyme catalyses N(6)-methyl-L-lysyl(9)-[histone H3] + S-adenosyl-L-methionine = N(6),N(6)-dimethyl-L-lysyl(9)-[histone H3] + S-adenosyl-L-homocysteine + H(+). It catalyses the reaction L-lysyl(9)-[histone H3] + S-adenosyl-L-methionine = N(6)-methyl-L-lysyl(9)-[histone H3] + S-adenosyl-L-homocysteine + H(+). Its function is as follows. Histone methyltransferase. Methylates 'Lys-9' of histone H3. H3 'Lys-9' methylation represents a specific tag for epigenetic transcriptional repression. Seems to act preferentially on dsMRNA. This is Histone-lysine N-methyltransferase, H3 lysine-9 specific SUVH6 (SUVH6) from Arabidopsis thaliana (Mouse-ear cress).